The primary structure comprises 226 residues: Late protein I226R (226 aa).

The first 16 residues, 1–16, serve as a signal peptide directing secretion; that stretch reads MKMETFLVCLFHNADG. 2 N-linked (GlcNAc...) asparagine; by host glycosylation sites follow: N142 and N164.

It belongs to the asfivirus I226R family.

In terms of biological role, plays a role in the inhibition of host NF-kappa-B and IRF3 signaling pathways. Mechanistically, promotes the degradation of host IKBKG through enhancing its ubiquitination leading to inhibition of both pathways. This chain is Late protein I226R, found in African swine fever virus (isolate Tick/South Africa/Pretoriuskop Pr4/1996) (ASFV).